A 356-amino-acid chain; its full sequence is Cysteine protease XCP2 (356 aa).

Positions 1 to 26 (MALSSPSRILCFALALSAASLSLSFA) are cleaved as a signal peptide. Positions 27–137 (SSHDYSIVGY…AEFAYRDVEA (111 aa)) are cleaved as a propeptide — activation peptide. Intrachain disulfides connect Cys159–Cys201, Cys193–Cys234, and Cys292–Cys343. Residue Cys162 is part of the active site. Asn181 is a glycosylation site (N-linked (GlcNAc...) asparagine). Active-site residues include His298 and Asn318.

The protein belongs to the peptidase C1 family. As to quaternary structure, interacts with PRN2. In terms of tissue distribution, mostly expressed in roots, stems and flowers. Confined to tracheary elements, and specifically to xylem.

The protein resides in the vacuole. It localises to the cell membrane. In terms of biological role, cysteine protease involved in xylem tracheary element (TE) autolysis during xylogenesis in roots. Participates in micro autolysis within the intact central vacuole before mega autolysis is initiated by tonoplast implosion. Involved in susceptibility to the bacterial plant pathogen Ralstonia solanacearum. The polypeptide is Cysteine protease XCP2 (Arabidopsis thaliana (Mouse-ear cress)).